We begin with the raw amino-acid sequence, 193 residues long: dCTP deaminase, dUMP-forming (193 aa).

DCTP-binding positions include 101-106, Asp-119, 127-129, Gln-148, Tyr-162, and Gln-174; these read KSSLGR and TLE. The active-site Proton donor/acceptor is the Glu-129.

Belongs to the dCTP deaminase family. Homotrimer.

The enzyme catalyses dCTP + 2 H2O = dUMP + NH4(+) + diphosphate. It functions in the pathway pyrimidine metabolism; dUMP biosynthesis; dUMP from dCTP: step 1/1. Functionally, bifunctional enzyme that catalyzes both the deamination of dCTP to dUTP and the hydrolysis of dUTP to dUMP without releasing the toxic dUTP intermediate. This chain is dCTP deaminase, dUMP-forming, found in Bifidobacterium adolescentis (strain ATCC 15703 / DSM 20083 / NCTC 11814 / E194a).